The following is a 490-amino-acid chain: tRNA modification GTPase MnmE (490 aa).

Arg23, Glu80, and Lys133 together coordinate (6S)-5-formyl-5,6,7,8-tetrahydrofolate. Positions 229–412 (GIEVVIAGQP…LRRILLEVAG (184 aa)) constitute a TrmE-type G domain. Asn239 is a binding site for K(+). GTP contacts are provided by residues 239-244 (NAGKSS), 258-264 (TPVAGTT), and 283-286 (DTAG). Position 243 (Ser243) interacts with Mg(2+). Thr258, Val260, and Thr263 together coordinate K(+). Residue Thr264 participates in Mg(2+) binding. Low complexity predominate over residues 366–382 (PTAPTESAAVPPASARP). A disordered region spans residues 366 to 388 (PTAPTESAAVPPASARPAPAPRP). Residue 393 to 395 (SAR) participates in GTP binding. Position 490 (Lys490) interacts with (6S)-5-formyl-5,6,7,8-tetrahydrofolate.

Belongs to the TRAFAC class TrmE-Era-EngA-EngB-Septin-like GTPase superfamily. TrmE GTPase family. As to quaternary structure, homodimer. Heterotetramer of two MnmE and two MnmG subunits. Requires K(+) as cofactor.

It is found in the cytoplasm. Exhibits a very high intrinsic GTPase hydrolysis rate. Involved in the addition of a carboxymethylaminomethyl (cmnm) group at the wobble position (U34) of certain tRNAs, forming tRNA-cmnm(5)s(2)U34. In Verminephrobacter eiseniae (strain EF01-2), this protein is tRNA modification GTPase MnmE.